The chain runs to 837 residues: Toll-like receptor 4 (837 aa).

Positions 1-23 are cleaved as a signal peptide; it reads MMSASRLAGTLIPAMAFLSCVRP. The Extracellular segment spans residues 24–629; the sequence is ESWEPCVVPN…SLNITCQMNK (606 aa). A disulfide bridge links cysteine 29 with cysteine 38. N-linked (GlcNAc...) asparagine glycosylation occurs at asparagine 33. 5 LRR repeats span residues 53 to 74, 77 to 98, 101 to 122, 125 to 146, and 149 to 170; these read STKN…SFFS, ELQV…AYQS, HLST…AFSG, SLQK…PIGH, and TLKE…EYFS. Residue asparagine 171 is glycosylated (N-linked (GlcNAc...) asparagine). LRR repeat units lie at residues 174-197, 203-223, and 225-245; these read NLEY…RVLH, NLSL…AFKE, and RLHK…KTCI. An N-linked (GlcNAc...) asparagine glycan is attached at asparagine 203. Cysteine 279 and cysteine 304 are joined by a disulfide. 2 N-linked (GlcNAc...) asparagine glycosylation sites follow: asparagine 280 and asparagine 307. 10 LRR repeats span residues 329–349, 350–371, 372–392, 398–420, 421–442, 446–454, 470–493, 495–516, 519–540, and 543–563; these read GWQH…LKLK, SLKR…VDLP, SLEF…CSQS, SLKY…LGLE, QLEH…SVFL, NLIYLDISH, SLEV…FTEL, NLTF…AFNS, SLQV…PYKC, and SLRV…QELQ. Cysteine 388 and cysteine 389 are joined by a disulfide. Asparagine 495 and asparagine 524 each carry an N-linked (GlcNAc...) asparagine glycan. Residue asparagine 573 is glycosylated (N-linked (GlcNAc...) asparagine). Positions 577–627 constitute an LRRCT domain; the sequence is NDFACTCEHQSFLQWIKDQRQLLVEVERMECATPSDKQGMPVLSLNITCQM. Intrachain disulfides connect cysteine 581–cysteine 607 and cysteine 583–cysteine 625. N-linked (GlcNAc...) asparagine glycans are attached at residues asparagine 622 and asparagine 628. Residues 630-650 traverse the membrane as a helical segment; the sequence is TIIGVSVLSVLVVSVVAVLVY. Over 651–837 the chain is Cytoplasmic; that stretch reads KFYFHLMLLA…GCNWQEATSI (187 aa). The TIR domain maps to 670-813; the sequence is NVYDAFVIYS…IFWRRLRKAL (144 aa).

It belongs to the Toll-like receptor family. Belongs to the lipopolysaccharide (LPS) receptor, a multi-protein complex containing at least CD14, LY96 and TLR4. Binding to bacterial LPS leads to homodimerization. Interacts with LY96 via the extracellular domain. Interacts with MYD88 and TIRAP via their respective TIR domains. Interacts with TICAM2. Interacts with NOX4. Interacts with CNPY3 and HSP90B1; this interaction is required for proper folding in the endoplasmic reticulum. Interacts with MAP3K21; this interaction leads to negative regulation of TLR4 signaling. Interacts with CD36, following CD36 stimulation by oxLDL or amyloid-beta 42, and forms a heterodimer with TLR6. The trimeric complex is internalized and triggers inflammatory response. LYN kinase activity facilitates TLR4-TLR6 heterodimerization and signal initiation. Interacts with TICAM1 in response to LPS in a WDFY1-dependent manner. Interacts with WDFY1 in response to LPS. Interacts with SMPDL3B. Interacts with CEACAM1; upon lipopolysaccharide stimulation, forms a complex including TLR4 and the phosphorylated form of SYK and CEACAM1, which in turn, recruits PTPN6 that dephosphorylates SYK, reducing the production of reactive oxygen species (ROS) and lysosome disruption, which in turn, reduces the activity of the inflammasome. Interacts with RFTN1; the interaction occurs in response to lipopolysaccharide stimulation. Interacts with SCIMP; the interaction occurs in response to lipopolysaccharide stimulation and is enhanced by phosphorylation of SCIMP by LYN. This interaction facilitates the phosphorylation of TLR4 by LYN which elicits a selective cytokine response in macrophages. Interacts with TRAF3IP3. Interacts with TREM1; this interaction enhances TLR4-mediated inflammatory response. Interacts with ZG16B/PAUF. Interacts with CD82; this interaction inhibits TLR4-mediated signaling pathway. Phosphorylated on tyrosine residues by LYN after binding lipopolysaccharide. Post-translationally, ubiquitinated by RNF128 via 'Lys-28'-linked polyubiquitin chains, leading to proteasomal degradation.

The protein localises to the cell membrane. The protein resides in the early endosome. It is found in the cell projection. Its subcellular location is the ruffle. Its function is as follows. Transmembrane receptor that functions as a pattern recognition receptor recognizing pathogen- and damage-associated molecular patterns (PAMPs and DAMPs) to induce innate immune responses via downstream signaling pathways. At the plasma membrane, cooperates with LY96 to mediate the innate immune response to bacterial lipopolysaccharide (LPS). Also involved in LPS-independent inflammatory responses triggered by free fatty acids, such as palmitate, and Ni(2+). Mechanistically, acts via MYD88, TIRAP and TRAF6, leading to NF-kappa-B activation, cytokine secretion and the inflammatory response. Alternatively, CD14-mediated TLR4 internalization via endocytosis is associated with the initiation of a MYD88-independent signaling via the TICAM1-TBK1-IRF3 axis leading to type I interferon production. In addition to the secretion of proinflammatory cytokines, initiates the activation of NLRP3 inflammasome and formation of a positive feedback loop between autophagy and NF-kappa-B signaling cascade. In complex with TLR6, promotes inflammation in monocytes/macrophages by associating with TLR6 and the receptor CD86. Upon ligand binding, such as oxLDL or amyloid-beta 42, the TLR4:TLR6 complex is internalized and triggers inflammatory response, leading to NF-kappa-B-dependent production of CXCL1, CXCL2 and CCL9 cytokines, via MYD88 signaling pathway, and CCL5 cytokine, via TICAM1 signaling pathway. In myeloid dendritic cells, vesicular stomatitis virus glycoprotein G but not LPS promotes the activation of IRF7, leading to type I IFN production in a CD14-dependent manner. The sequence is that of Toll-like receptor 4 (TLR4) from Gorilla gorilla gorilla (Western lowland gorilla).